Here is a 547-residue protein sequence, read N- to C-terminus: MAGTKNKTRAQAKTEKKAAIQAKAGAEREATGVVRPVAKTRAKAKAKTGSKTDAVAEMKAVSKNKVVAETKEGALSEPKTLGKAMGDFTPKAGNESTSSTCKNEAGTDAWFWAGEEATINSWFWNGEEAGNSFSTKNDKPEIGAQVCAEELEPAAGADCKPRSGAEEEEEENVIGNWFWEGDDTSFDPNPKPVSRIVKPQPVYEINEKNRPKDWSEVTIWPNAPAVTPAVLGFRSQAPSEASPPSYIVLASAEENACSLPVATACRPSRNTRSCSQPIPECRFDSDPCIQTIDEIRRQIRIREVNGIKPFACPCKMECYMDSEEFEKLVSLLKSTTDPLIHKIARIAMGVHNVHPFAQEFINEVGVVTLIESLLSFPSPEMRKKTVITLNPPSGDERQRKIELHVKHMCKETMSFPLNSPGQQSGLKILGQLTTDFVHHYIVANYFSELFHLLSSGNCKTRNLVLKLLLNMSENPTAARDMINMKALAALKLIFNQKEAKANLVSGVAIFINIKEHIRKGSIVVVDHLSYNTLMAIFREVKEIIETM.

Positions 1 to 10 (MAGTKNKTRA) are enriched in basic residues. Disordered regions lie at residues 1–32 (MAGT…EATG) and 80–102 (TLGK…STCK).

It belongs to the GPRASP family. Homodimer. As to expression, highly expressed in brain. Not expressed in lung or liver. Down-regulated in brain from patients suffering from Alzheimer disease.

It is found in the cytoplasm. The protein localises to the nucleus. Its function is as follows. Survival and differentiation promoting protein that plays a role in the regulation of neurosynaptogenesis. Induces phosphatase PP2A activity which results in APP dephosphorylation and inhibits BACE1-mediated processing of APP. This Homo sapiens (Human) protein is G protein-coupled receptor associated sorting protein 3.